The sequence spans 1192 residues: Plakophilin-4 (1192 aa).

The tract at residues 1–31 is disordered; sequence MPAPEQASLVEEGQPQTRQEAASTGPGMEPE. Residues 36–70 are a coiled coil; it reads TILASVKEQELQFQRLTRELEVERQIVASQLERCR. The disordered stretch occupies residues 73 to 262; it reads AESPSIASTS…PRPLNPSAYS (190 aa). Residue Ser-75 is modified to Phosphoserine. The span at 77–86 shows a compositional bias: polar residues; it reads SIASTSSTEK. Thr-84 is modified (phosphothreonine). Ser-106, Ser-132, Ser-136, and Ser-139 each carry phosphoserine. Composition is skewed to polar residues over residues 138–156, 163–204, and 214–230; these read GSLG…SDSG, FHNS…QPSV, and SVPS…STGV. 3 positions are modified to phosphoserine: Ser-221, Ser-231, and Ser-236. Over residues 231 to 242 the composition is skewed to low complexity; that stretch reads SPSRGSLRTSLG. Arg-254 and Arg-270 each carry omega-N-methylarginine. Phosphoserine occurs at positions 273 and 281. The disordered stretch occupies residues 290–310; that stretch reads SVTSRQTSNPNGPTPQYQTTA. A phosphoserine mark is found at Ser-314, Ser-327, and Ser-337. A disordered region spans residues 323-348; sequence TRVASPSQGQVGSSSPKRSGMTAVPQ. Residues 325–338 show a composition bias toward low complexity; sequence VASPSQGQVGSSSP. Tyr-372 is modified (phosphotyrosine). Ser-392, Ser-403, and Ser-406 each carry phosphoserine. Thr-412 carries the post-translational modification Phosphothreonine. Tyr-415 carries the phosphotyrosine modification. Residues 415 to 455 form an ARM 1 repeat; it reads YEGRTYYSPVYRSPNHGTVELQGSQTALYRTGSVGIGNLQR. A phosphoserine mark is found at Ser-422, Ser-427, and Ser-438. Tyr-478 bears the Phosphotyrosine mark. Phosphoserine is present on residues Ser-510, Ser-512, and Ser-515. ARM repeat units follow at residues 518–557, 560–599, 604–644, 660–702, and 706–751; these read KDPR…HLCF, NKVK…NLVF, DENK…NLSS, LTNT…NLSS, and EARK…NLSY. A compositionally biased stretch (basic and acidic residues) spans 773–782; sequence GKESPSKDSE. The segment at 773-810 is disordered; sequence GKESPSKDSEPSCWGKKKKKKKRTPQEDQWDGVGPIPG. Ser-776 carries the post-translational modification Phosphoserine. ARM repeat units follow at residues 815–855, 862–901, and 950–993; these read PKGV…NLSA, AYIR…NMAL, and MENA…TLWQ. Phosphothreonine occurs at positions 1013 and 1017. Ser-1045 carries the post-translational modification Phosphoserine. The interval 1058 to 1086 is disordered; that stretch reads PRSEYDRTQPPMQYYNSQGDATHKGLYPG. A compositionally biased stretch (polar residues) spans 1067-1077; sequence PPMQYYNSQGD. Phosphoserine occurs at positions 1091, 1100, and 1135.

Belongs to the beta-catenin family. Interacts with PDZD2. Interacts (via the C-terminus) with FRMPD2 (via the PDZ 2 domain). Interacts with RHOA; the interaction is detected at the midbody. Interacts with ECT2; the interaction is detected at the midbody. Interacts with CCDC85B. Expressed in salivary glands (at protein level). Expressed in arrector pili muscle (at protein level).

The protein resides in the cell junction. It is found in the desmosome. It localises to the cytoplasm. The protein localises to the cytoskeleton. Its subcellular location is the spindle. The protein resides in the midbody. It is found in the cell membrane. Functionally, plays a role as a regulator of Rho activity during cytokinesis. May play a role in junctional plaques. This Homo sapiens (Human) protein is Plakophilin-4 (PKP4).